Consider the following 217-residue polypeptide: Protein GrpE (217 aa).

Belongs to the GrpE family. In terms of assembly, homodimer.

The protein resides in the cytoplasm. Functionally, participates actively in the response to hyperosmotic and heat shock by preventing the aggregation of stress-denatured proteins, in association with DnaK and GrpE. It is the nucleotide exchange factor for DnaK and may function as a thermosensor. Unfolded proteins bind initially to DnaJ; upon interaction with the DnaJ-bound protein, DnaK hydrolyzes its bound ATP, resulting in the formation of a stable complex. GrpE releases ADP from DnaK; ATP binding to DnaK triggers the release of the substrate protein, thus completing the reaction cycle. Several rounds of ATP-dependent interactions between DnaJ, DnaK and GrpE are required for fully efficient folding. This is Protein GrpE from Mycoplasma genitalium (strain ATCC 33530 / DSM 19775 / NCTC 10195 / G37) (Mycoplasmoides genitalium).